The chain runs to 911 residues: Alpha-actinin-4 (911 aa).

Residues 1 to 269 (MVDYHAANQS…YVSSFYHAFS (269 aa)) are actin-binding. The disordered stretch occupies residues 8 to 31 (NQSYQYGPSSGSNGAGGGGTMGDY). The interval 12 to 26 (QYGPSSGSNGAGGGG) is interaction with VCL. At Tyr-31 the chain carries Phosphotyrosine. The interval 40-61 (RDLLLDPAWEKQQRKTFTAWCN) is interaction with VCL. Calponin-homology (CH) domains are found at residues 50-154 (KQQR…LRFA) and 163-269 (TSAK…HAFS). Residues 84-88 (LMLLL) carry the LXXLL motif motif. The tract at residues 108-126 (KINNVNKALDFIASKGVKL) is interaction with VCL. At Lys-114 the chain carries N6-acetyllysine. The interval 177–192 (TAPYKNVNVQNFHISW) is polyphosphoinositide (PIP2)-binding. Lys-214 bears the N6-acetyllysine mark. Thr-249 is modified (phosphothreonine). 4 Spectrin repeats span residues 293 to 403 (HLME…WLLN), 413 to 518 (HLAE…ALEK), 528 to 639 (QLHL…ALLE), and 649 to 752 (HLRR…EVEN). Residues Lys-592 and Lys-625 each carry the N6-acetyllysine modification. Ser-696 bears the Phosphoserine mark. A mediates interaction with MICALL2 region spans residues 736-911 (WEQLLTTIAR…STALYGESDL (176 aa)). EF-hand domains follow at residues 765–800 (EQMQEFRASFNHFDKDHGGALGPEEFKACLISLGYD) and 806–841 (QGDAEFNRIMSVVDPNHSGLVTFQAFIDFMSRETTD). A Ca(2+)-binding site is contributed by Asp-778. Lys-779 carries the post-translational modification N6-acetyllysine. 2 residues coordinate Ca(2+): Asp-780 and Glu-789. Lys-859 is modified (N6-acetyllysine). Residue Ser-909 is modified to Phosphoserine.

The protein belongs to the alpha-actinin family. As to quaternary structure, homodimer; antiparallel. Identified in a IGF2BP1-dependent mRNP granule complex containing untranslated mRNAs. Component of the CART complex, at least composed of ACTN4, HGS/HRS, MYO5B and TRIM3. Binds TRIM3 at the N-terminus. Interacts with MAGI1. Interacts with PDLIM2. Identified in a complex with CASK, IQGAP1, MAGI2, NPHS1, SPTAN1 and SPTBN1. Interacts with MICALL2 (preferentially in opened conformation); stimulated by RAB13 activation. Interacts with PPARG and RARA. Binds to VCL; this interaction triggers VCL conformational changes. Interacts with SEPTIN14. Interacts with IGSF8.

It localises to the nucleus. Its subcellular location is the cytoplasm. The protein resides in the cell junction. It is found in the cytoskeleton. The protein localises to the stress fiber. It localises to the perinuclear region. Functionally, F-actin cross-linking protein which is thought to anchor actin to a variety of intracellular structures. This is a bundling protein. Probably involved in vesicular trafficking via its association with the CART complex. The CART complex is necessary for efficient transferrin receptor recycling but not for EGFR degradation. Involved in tight junction assembly in epithelial cells probably through interaction with MICALL2. Links MICALL2 to the actin cytoskeleton and recruits it to the tight junctions. May also function as a transcriptional coactivator, stimulating transcription mediated by the nuclear hormone receptors PPARG and RARA. Association with IGSF8 regulates the immune synapse formation and is required for efficient T-cell activation. This is Alpha-actinin-4 from Bos taurus (Bovine).